The following is a 578-amino-acid chain: MDQKRLFLAIAISLGILLGFQGLYRHFVPEPPAAARTATNAGQGKPNNTLGAVPTDATASQSPPPKEGARLAVDAPRVKGSISLVGARFDDLVLRDYHETVDKNSPLVRLLAPLSGDEPYYVEYGWVPEESGIATPGRDTEWKADAATLTPNKPVTLSWDNGAGLTFMLKVAVDADYMFSVTQSVRNTTGKPVVLHPYARVRRDYRPEVEGYTVLHEGLIGVVDGILHEITYKSADSDGAKNNGLAFEHASTGGWAGITDKYWLTALIPDQITSVDFSFRDTKPNGRDGYQVGIISHNPDQVAAGAESASTTHLFAGAKVVSLLDHYQAEYHIPSFWEAVDFGWFWFITRPFFYALDWLYHLVGNFGVAILIFTVLVKAAFYPLASKSYRSMSKMRLLAPKIQSLRERYKDDPTRMQQEVMQLYKAEGANPASGCLPMLLQFPIFFSLYKVIFVTIEMRHAPFFGWIHDLSAVDPTNLFNLFGLLPFDPTHISPFLHLGIWPLIMGGTMYLQQKMNPPMPDPVQARMFQFMPIIFTFMLARFPVGLVIYWSWNNLLSIGQQWLIQRRTKLPRPELAKV.

Residues 7–27 form a helical membrane-spanning segment; that stretch reads FLAIAISLGILLGFQGLYRHF. The tract at residues 35 to 70 is disordered; that stretch reads ARTATNAGQGKPNNTLGAVPTDATASQSPPPKEGAR. A compositionally biased stretch (polar residues) spans 37-50; sequence TATNAGQGKPNNTL. Transmembrane regions (helical) follow at residues 362 to 382, 436 to 456, 491 to 511, and 530 to 550; these read LVGN…AAFY, LPML…FVTI, HISP…TMYL, and FMPI…VIYW.

The protein belongs to the OXA1/ALB3/YidC family. Type 1 subfamily. Interacts with the Sec translocase complex via SecD. Specifically interacts with transmembrane segments of nascent integral membrane proteins during membrane integration.

The protein localises to the cell inner membrane. Required for the insertion and/or proper folding and/or complex formation of integral membrane proteins into the membrane. Involved in integration of membrane proteins that insert both dependently and independently of the Sec translocase complex, as well as at least some lipoproteins. Aids folding of multispanning membrane proteins. This Granulibacter bethesdensis (strain ATCC BAA-1260 / CGDNIH1) protein is Membrane protein insertase YidC.